We begin with the raw amino-acid sequence, 154 residues long: uncharacterized protein (154 aa).

Coiled coils occupy residues 8–48 (DEEV…AIEA) and 89–138 (VQEL…RGLV).

This is an uncharacterized protein from Treponema pallidum (strain Nichols).